A 515-amino-acid polypeptide reads, in one-letter code: Penton protein (515 aa).

The tract at residues 1-25 (MYRSLRPPTSIPPPPPSGPSPYPAM) is disordered. A compositionally biased stretch (pro residues) spans 9-22 (TSIPPPPPSGPSPY).

It belongs to the adenoviridae penton family. As to quaternary structure, interacts with the fiber protein (via N-terminal tail region). Interacts with the capsid vertex protein; this interaction binds the penton base to neighboring peripentonal hexons.

It localises to the virion. The protein resides in the host nucleus. Its function is as follows. Major capsid protein that self-associates to form penton base pentamers, each in the shape of a pentagon, situated at the 12 vertices of the pseudo T=25 capsid. Involved in virus secondary attachment to host cell after initial attachment by the fiber protein, and in endocytosis of virions. As the virus enters the host cell, penton proteins are shed concomitant with virion acidification in the endosome. The polypeptide is Penton protein (Galliformes (FAdV-1)).